The chain runs to 274 residues: Large ribosomal subunit protein uL2 (274 aa).

Disordered regions lie at residues 38 to 57 and 224 to 256; these read KRTG…VGGG and AMNP…KGYK. The span at 229-239 shows a compositional bias: basic and acidic residues; it reads DHPHGGGEGRN.

This sequence belongs to the universal ribosomal protein uL2 family. As to quaternary structure, part of the 50S ribosomal subunit. Forms a bridge to the 30S subunit in the 70S ribosome.

In terms of biological role, one of the primary rRNA binding proteins. Required for association of the 30S and 50S subunits to form the 70S ribosome, for tRNA binding and peptide bond formation. It has been suggested to have peptidyltransferase activity; this is somewhat controversial. Makes several contacts with the 16S rRNA in the 70S ribosome. The protein is Large ribosomal subunit protein uL2 of Acinetobacter baumannii (strain AB307-0294).